A 588-amino-acid polypeptide reads, in one-letter code: Disabled homolog 1 (588 aa).

The segment at 1 to 26 (MSTETELQVAVKTSAKKDSRKKGQDR) is disordered. The span at 15–26 (AKKDSRKKGQDR) shows a compositional bias: basic and acidic residues. The PID domain occupies 36–189 (KGEGVRYKAK…CEQAVYQTIL (154 aa)). Residues tyrosine 198, tyrosine 220, and tyrosine 232 each carry the phosphotyrosine modification. Disordered stretches follow at residues 224-243 (TSQKKEGVYDVPKSQPNSQP), 420-444 (LATVPGTNDSARSSPQSDKPRQKMG), 451-470 (FQMVQPPPVPSRKPDQPSLT), and 502-588 (LTPV…QDGS). The span at 424-436 (PGTNDSARSSPQS) shows a compositional bias: polar residues. Composition is skewed to low complexity over residues 503-512 (TPVTSTTPST) and 523-534 (SSPSKSSASHVS). Serine 524 is modified (phosphoserine; by CDK5). Positions 537–546 (TADDIFEEGF) are enriched in acidic residues.

In terms of assembly, associates with the SH2 domains of SRC, FYN and ABL. Interacts (phosphorylated on tyrosine residues) with CRK and CRKL (via respective SH2 domain). Interacts with SIAH1, LRP8 and VLDLR. Interacts with LRP1. Interacts with APLP1 (via NPXY motif). Interacts with DAB2IP. Interacts with ZSWIM8. In terms of processing, phosphorylated by FYN on Tyr-198 and Tyr-220 upon reelin induction in embryonic neurons. Also found phosphorylated on Tyr-232 upon reelin induction. Also phosphorylated on Ser-524 independently of reelin signaling. Post-translationally, ubiquitinated by various cullin-5-RING E3 ubiquitin-protein ligase complexes (ECS complexes) following ligand-binding and phosphorylation, leading to its degradation. Ubiquitinated by the ECS(SOCS7) complex in the cortical plate of the developing cerebral cortex following ligand-binding and phosphorylation by FYN, leading to its degradation by the proteasome. Recognized by ZSWIM8 through a disorder targets misorder mechanism that eliminates misfolded DAB1 via ubiquitination and proteasomal degradation. As to expression, expressed mainly in brain. Specifically expressin in cortical neurons.

It is found in the cytoplasm. Its function is as follows. Signaling adapter of the reelin-mediated signaling pathway, which regulates the migration and differentiation of postmitotic neurons during brain development. Mediates intracellular transduction of Reelin signaling following reelin (RELN)-binding to its receptor: acts by docking proteins through its phosphotyrosine residues and PID domain. In Mus musculus (Mouse), this protein is Disabled homolog 1.